We begin with the raw amino-acid sequence, 386 residues long: Putative matrix metalloproteinase (386 aa).

An N-terminal signal peptide occupies residues 1 to 34 (MPTAHFQHSIRYLNVTNMLIFSIISFLLIYQTNS). N14 and N58 each carry an N-linked (GlcNAc...) asparagine; by host glycan. H186 provides a ligand contact to Zn(2+). Residue E187 is part of the active site. The Zn(2+) site is built by H190 and H196. Positions 235 to 258 (NEQSTHQSTRHRPHRRPSPDGSCR) are disordered.

This sequence belongs to the peptidase M10A family. It depends on Zn(2+) as a cofactor.

In Spodoptera frugiperda (Fall armyworm), this protein is Putative matrix metalloproteinase.